The following is a 398-amino-acid chain: Sphingosine 1-phosphate receptor 5 (398 aa).

Topologically, residues 1-40 (MEPGLLRPAPVSEVIVLHYNYTGKLRGARYQPGAGLRADA) are extracellular. Asn20 carries N-linked (GlcNAc...) asparagine glycosylation. The helical transmembrane segment at 41-61 (VVCLAVCALIVLENLAVLVVL) threads the bilayer. Residues 62-70 (GRHPRFHAP) lie on the Cytoplasmic side of the membrane. A helical transmembrane segment spans residues 71 to 91 (MFLLLGSLTLSDLLAGAAYAA). Topologically, residues 92–111 (NILLSGPLTLRLSPALWFAR) are extracellular. A helical transmembrane segment spans residues 112–132 (EGGVFVALAASVLSLLAIALE). Residues 133-151 (RLLTMERRGPAPAARRGRT) lie on the Cytoplasmic side of the membrane. The chain crosses the membrane as a helical span at residues 152–172 (LALAAGAWGVSLLLGLLPALG). The Extracellular portion of the chain corresponds to 173–191 (WNCLGRLEACSTVLPLYAK). The helical transmembrane segment at 192-212 (AYVLFCVLAFVGILAAICGLY) threads the bilayer. The Cytoplasmic portion of the chain corresponds to 213–252 (ARIYCQVRAKAQRLRARPGAGEGTSARARGTPRSLALLRT). The helical transmembrane segment at 253 to 273 (LSVVLVAFVACWGPLFLLLLL) threads the bilayer. The Extracellular portion of the chain corresponds to 274-287 (DVACPARACPVLLQ). Residues 288-308 (ADPFLGLAMANSLLNPIIYTF) traverse the membrane as a helical segment. The Cytoplasmic portion of the chain corresponds to 309-398 (TNRDLRHALL…QTLVPPPAAD (90 aa)). Cys323 carries S-palmitoyl cysteine lipidation. The interval 332 to 398 (SGTSRSPGST…QTLVPPPAAD (67 aa)) is disordered. Over residues 334–343 (TSRSPGSTLG) the composition is skewed to low complexity. A Phosphoserine modification is found at Ser337. The span at 359–373 (SSSRSERSSPQRDGL) shows a compositional bias: basic and acidic residues. At Ser381 the chain carries Phosphoserine.

It belongs to the G-protein coupled receptor 1 family.

The protein localises to the cell membrane. Its function is as follows. Receptor for the lysosphingolipid sphingosine 1-phosphate (S1P). S1P is a bioactive lysophospholipid that elicits diverse physiological effect on most types of cells and tissues. Is coupled to both the G(i/O)alpha and G(12) subclass of heteromeric G-proteins. This Sus scrofa (Pig) protein is Sphingosine 1-phosphate receptor 5 (S1PR5).